Here is an 876-residue protein sequence, read N- to C-terminus: Serrate RNA effector molecule homolog (876 aa).

The tract at residues 1–90 (MGDSDDEYDR…RRDWDEHSSD (90 aa)) is disordered. Gly-2 carries the post-translational modification N-acetylglycine. At Ser-4 the chain carries Phosphoserine. Tyr-8 carries the phosphotyrosine modification. A compositionally biased stretch (basic and acidic residues) spans 8-73 (YDRRRRDKFR…ERFSPPRHEL (66 aa)). Phosphoserine occurs at positions 67, 74, and 136. Residue Lys-150 forms a Glycyl lysine isopeptide (Lys-Gly) (interchain with G-Cter in SUMO2) linkage. The segment at 272 to 413 (EEEEQAGKPG…PKDAPGLECK (142 aa)) is disordered. Positions 297-347 (DGERKANEKDDKKEDGKQAENESSSDDKIKKSEGDGDKEEKKEDSEKEAKK) are enriched in basic and acidic residues. A compositionally biased stretch (acidic residues) spans 370–387 (SESESESGQAEEEKEEAD). A compositionally biased stretch (basic and acidic residues) spans 388-413 (ETLKEKEKPKEEEREKPKDAPGLECK). The residue at position 493 (Ser-493) is a Phosphoserine. Thr-544 bears the Phosphothreonine mark. Ser-570 bears the Phosphoserine mark. The segment at 575 to 597 (ELLGSSGGAPPEEPPKEGNPAEI) is disordered. A Phosphothreonine modification is found at Thr-671. At Ser-679 the chain carries Phosphoserine. 3 positions are modified to omega-N-methylarginine: Arg-833, Arg-840, and Arg-850. The tract at residues 835-854 (NYDAFRGQGGYPGKPRNRMV) is disordered.

Belongs to the ARS2 family. Interacts with CASP8AP2, ERBB4, NCBP1/CBP80 and DROSHA. Interacts with LUZP4. Interacts with NCBP2/CBP20 and NCBP3. Interacts with MTREX.

It is found in the nucleus. The protein localises to the nucleoplasm. It localises to the cytoplasm. In terms of biological role, acts as a mediator between the cap-binding complex (CBC) and the primary microRNAs (miRNAs) processing machinery during cell proliferation. Contributes to the stability and delivery of capped primary miRNA transcripts to the primary miRNA processing complex containing DGCR8 and DROSHA, thereby playing a role in RNA-mediated gene silencing (RNAi) by miRNAs. Binds capped RNAs (m7GpppG-capped RNA); however interaction is probably mediated via its interaction with NCBP1/CBP80 component of the CBC complex. Involved in cell cycle progression at S phase. Does not directly confer arsenite resistance but rather modulates arsenic sensitivity. Independently of its activity on miRNAs, necessary and sufficient to promote neural stem cell self-renewal. Does so by directly binding SOX2 promoter and positively regulating its transcription. This Bos taurus (Bovine) protein is Serrate RNA effector molecule homolog (SRRT).